The chain runs to 107 residues: QQVAAGAVSFRKCTPCHNIGEGATNKVGPVLDGLEGRHSGSIPGFNYSEANKKSGLTWDKATFKSYIADPRAKIPGTKMVFAGIKNEKEQEDLWAFLTQYGPDGKKK.

Glutamine 1 carries the pyrrolidone carboxylic acid modification. The heme c site is built by cysteine 13, cysteine 16, histidine 17, and methionine 79.

The protein belongs to the cytochrome c family. In terms of processing, binds 1 heme c group covalently per subunit.

It is found in the periplasm. Cytochrome c2 is found mainly in purple, non-sulfur, photosynthetic bacteria where it functions as the electron donor to the oxidized bacteriochlorophyll in the photophosphorylation pathway. However, it may also have a role in the respiratory chain and is found in some non-photosynthetic bacteria. In Rhodoplanes tepidamans (Rhodoplanes cryptolactis), this protein is Cytochrome c2.